Reading from the N-terminus, the 488-residue chain is Protein DETOXIFICATION 35 (488 aa).

Transmembrane regions (helical) follow at residues 38 to 58 (LWMIAAPVGFNIICQYGVSSV), 73 to 93 (AVSISLSVIGTFSFGFLLGMG), 121 to 141 (IILFVSCFFLLPIYIFATPVL), 150 to 170 (IAVPAGQFTLLTIPQLFSLAF), 187 to 207 (IAWIGFVALSLHVIMLWLFII), 218 to 238 (LAFNITNWGTAIAQIVYVIGW), 262 to 282 (IASAVMLCLEIWYMMSIIVLT), 296 to 316 (SICMNINGLEAMLFIGINAAI), 336 to 356 (VYVTVFQSLLIGLVFMVAIII), 379 to 401 (AYLLGITMVLNSVQPVVSGVAVG), 408 to 428 (VAYINLGCYYIFGLPFGYLLG), and 439 to 459 (WSGMIAGTALQTLLLLIVLYK).

Belongs to the multi antimicrobial extrusion (MATE) (TC 2.A.66.1) family. As to expression, highly expressed in inflorescence tissues, especially in floral epidermal guard cells including those of the anthers, stigma, siliques and nectaries. Also detected in the meristematic zone of the root apex and in the elongation zone through to the fully expanded cells of the differentiation zone.

The protein localises to the vacuole membrane. Multidrug and toxin efflux transporter involved in flavonoid metabolism. Required for proper reproductive development. The protein is Protein DETOXIFICATION 35 of Arabidopsis thaliana (Mouse-ear cress).